Here is a 547-residue protein sequence, read N- to C-terminus: Chaperonin GroEL (547 aa).

ATP contacts are provided by residues 30 to 33, Lys-51, 87 to 91, Gly-415, 479 to 481, and Asp-495; these read TLGP, DGTTT, and NAA.

Belongs to the chaperonin (HSP60) family. Forms a cylinder of 14 subunits composed of two heptameric rings stacked back-to-back. Interacts with the co-chaperonin GroES.

The protein localises to the cytoplasm. The enzyme catalyses ATP + H2O + a folded polypeptide = ADP + phosphate + an unfolded polypeptide.. Its function is as follows. Together with its co-chaperonin GroES, plays an essential role in assisting protein folding. The GroEL-GroES system forms a nano-cage that allows encapsulation of the non-native substrate proteins and provides a physical environment optimized to promote and accelerate protein folding. This is Chaperonin GroEL from Pseudomonas aeruginosa (strain UCBPP-PA14).